Here is a 646-residue protein sequence, read N- to C-terminus: Cell surface glycoprotein MUC18 (646 aa).

The signal sequence occupies residues 1-23 (MGLPRLVCAFLLAACCCCPRVAG). Ig-like V-type domains follow at residues 24-129 (VPGE…YRIQ) and 139-242 (PNIQ…REVT). The Extracellular segment spans residues 24–559 (VPGEAEQPAP…RKLPEPESRG (536 aa)). 4 cysteine pairs are disulfide-bonded: C48–C116, C161–C223, C272–C320, and C365–C407. A glycan (N-linked (GlcNAc...) asparagine) is linked at N56. Ig-like C2-type domains are found at residues 244-330 (PVFY…TMIS), 335-424 (PQEL…QLVN), and 430-510 (PPWM…KNTS). The tract at residues 278–299 (PPPHFSISKQNPSTREAEEETT) is disordered. N-linked (GlcNAc...) asparagine glycans are attached at residues N418, N449, N467, N508, N518, N527, and N544. Cysteines 452 and 499 form a disulfide. A disordered region spans residues 525 to 554 (DSNTTTGLSTSTASPHTRANSTSTERKLPE). Polar residues predominate over residues 533-547 (STSTASPHTRANSTS). A helical membrane pass occupies residues 560–583 (VVIVAVIVCILVLAVLGAVLYFLY). The Cytoplasmic segment spans residues 584–646 (KKGKLPCRRS…QGEKYIDLRH (63 aa)). A phosphoserine mark is found at S606, S614, and S628. A disordered region spans residues 620–646 (EMGLLQGSSGDKRAPGDQGEKYIDLRH). A compositionally biased stretch (basic and acidic residues) spans 629 to 646 (GDKRAPGDQGEKYIDLRH).

In terms of tissue distribution, detected in endothelial cells in vascular tissue throughout the body. May appear at the surface of neural crest cells during their embryonic migration. Appears to be limited to vascular smooth muscle in normal adult tissues. Associated with tumor progression and the development of metastasis in human malignant melanoma. Expressed most strongly on metastatic lesions and advanced primary tumors and is only rarely detected in benign melanocytic nevi and thin primary melanomas with a low probability of metastasis.

The protein resides in the membrane. In terms of biological role, plays a role in cell adhesion, and in cohesion of the endothelial monolayer at intercellular junctions in vascular tissue. Its expression may allow melanoma cells to interact with cellular elements of the vascular system, thereby enhancing hematogeneous tumor spread. Could be an adhesion molecule active in neural crest cells during embryonic development. Acts as a surface receptor that triggers tyrosine phosphorylation of FYN and PTK2/FAK1, and a transient increase in the intracellular calcium concentration. The sequence is that of Cell surface glycoprotein MUC18 (MCAM) from Homo sapiens (Human).